Consider the following 275-residue polypeptide: Large ribosomal subunit protein uL2 (275 aa).

A disordered region spans residues valine 223–serine 260.

Belongs to the universal ribosomal protein uL2 family. In terms of assembly, part of the 50S ribosomal subunit. Forms a bridge to the 30S subunit in the 70S ribosome.

One of the primary rRNA binding proteins. Required for association of the 30S and 50S subunits to form the 70S ribosome, for tRNA binding and peptide bond formation. It has been suggested to have peptidyltransferase activity; this is somewhat controversial. Makes several contacts with the 16S rRNA in the 70S ribosome. This is Large ribosomal subunit protein uL2 from Legionella pneumophila (strain Lens).